Here is a 407-residue protein sequence, read N- to C-terminus: Carbamoyl phosphate synthase small chain (407 aa).

The segment at 1-205 (MTETTPKTAP…LQDGYGEQDA (205 aa)) is CPSase. L-glutamine-binding residues include Ser60, Gly257, and Gly259. Positions 209–397 (HVVALDFGVK…INLIRERKGQ (189 aa)) constitute a Glutamine amidotransferase type-1 domain. The active-site Nucleophile is the Cys286. The L-glutamine site is built by Leu287, Gln290, Asn328, Gly330, and Phe331. Residues His370 and Glu372 contribute to the active site.

It belongs to the CarA family. Composed of two chains; the small (or glutamine) chain promotes the hydrolysis of glutamine to ammonia, which is used by the large (or ammonia) chain to synthesize carbamoyl phosphate. Tetramer of heterodimers (alpha,beta)4.

The catalysed reaction is hydrogencarbonate + L-glutamine + 2 ATP + H2O = carbamoyl phosphate + L-glutamate + 2 ADP + phosphate + 2 H(+). It carries out the reaction L-glutamine + H2O = L-glutamate + NH4(+). The protein operates within amino-acid biosynthesis; L-arginine biosynthesis; carbamoyl phosphate from bicarbonate: step 1/1. It participates in pyrimidine metabolism; UMP biosynthesis via de novo pathway; (S)-dihydroorotate from bicarbonate: step 1/3. Its function is as follows. Small subunit of the glutamine-dependent carbamoyl phosphate synthetase (CPSase). CPSase catalyzes the formation of carbamoyl phosphate from the ammonia moiety of glutamine, carbonate, and phosphate donated by ATP, constituting the first step of 2 biosynthetic pathways, one leading to arginine and/or urea and the other to pyrimidine nucleotides. The small subunit (glutamine amidotransferase) binds and cleaves glutamine to supply the large subunit with the substrate ammonia. This Brucella abortus (strain S19) protein is Carbamoyl phosphate synthase small chain.